A 69-amino-acid polypeptide reads, in one-letter code: UPF0435 protein SH1076 (69 aa).

This sequence belongs to the UPF0435 family.

The sequence is that of UPF0435 protein SH1076 from Staphylococcus haemolyticus (strain JCSC1435).